The primary structure comprises 307 residues: Ribonuclease HII (307 aa).

Residues Glu44–Leu235 form the RNase H type-2 domain. A divalent metal cation-binding residues include Asp50, Glu51, and Asp144. Residues Ala241 to Pro307 form a disordered region. Residues Ala250 to Gly280 are compositionally biased toward low complexity. Basic and acidic residues predominate over residues Arg287 to Asp296.

The protein belongs to the RNase HII family. It depends on Mn(2+) as a cofactor. Requires Mg(2+) as cofactor.

It is found in the cytoplasm. It carries out the reaction Endonucleolytic cleavage to 5'-phosphomonoester.. Functionally, endonuclease that specifically degrades the RNA of RNA-DNA hybrids. The protein is Ribonuclease HII of Acidothermus cellulolyticus (strain ATCC 43068 / DSM 8971 / 11B).